We begin with the raw amino-acid sequence, 189 residues long: Ribonuclease M5 (189 aa).

In terms of domain architecture, Toprim spans 8-91 (KEIIVVEGKD…AFLPKEEALA (84 aa)). Positions 14, 60, and 62 each coordinate Mg(2+).

Belongs to the ribonuclease M5 family. Mg(2+) serves as cofactor.

The protein resides in the cytoplasm. The catalysed reaction is Endonucleolytic cleavage of RNA, removing 21 and 42 nucleotides, respectively, from the 5'- and 3'-termini of a 5S-rRNA precursor.. Functionally, required for correct processing of both the 5' and 3' ends of 5S rRNA precursor. Cleaves both sides of a double-stranded region yielding mature 5S rRNA in one step. The sequence is that of Ribonuclease M5 from Bacillus cereus (strain ATCC 14579 / DSM 31 / CCUG 7414 / JCM 2152 / NBRC 15305 / NCIMB 9373 / NCTC 2599 / NRRL B-3711).